We begin with the raw amino-acid sequence, 153 residues long: Glucose-6-phosphate 1-dehydrogenase (153 aa).

2 residues coordinate NADP(+): Arg-21 and Lys-120. Position 120 (Lys-120) interacts with D-glucose 6-phosphate.

Belongs to the glucose-6-phosphate dehydrogenase family.

The protein resides in the cytoplasm. It is found in the cytosol. The catalysed reaction is D-glucose 6-phosphate + NADP(+) = 6-phospho-D-glucono-1,5-lactone + NADPH + H(+). It functions in the pathway carbohydrate degradation; pentose phosphate pathway; D-ribulose 5-phosphate from D-glucose 6-phosphate (oxidative stage): step 1/3. In terms of biological role, cytosolic glucose-6-phosphate dehydrogenase that catalyzes the first and rate-limiting step of the oxidative branch within the pentose phosphate pathway/shunt, an alternative route to glycolysis for the dissimilation of carbohydrates and a major source of reducing power and metabolic intermediates for fatty acid and nucleic acid biosynthetic processes. The chain is Glucose-6-phosphate 1-dehydrogenase (ZW) from Hyalophora cecropia (Cecropia moth).